We begin with the raw amino-acid sequence, 511 residues long: RNA polymerase principal sigma factor HrdB (511 aa).

Residues Ser72–Glu186 are disordered. Over residues Arg78–Ala93 the composition is skewed to basic residues. Positions Thr94–Ala121 are enriched in low complexity. The segment covering Ala132 to Thr158 has biased composition (basic residues). A binds RNA polymerase-binding protein RbpA region spans residues Thr211–Arg347. The sigma-70 factor domain-2 stretch occupies residues Leu278–Thr348. The Interaction with polymerase core subunit RpoC signature appears at Asp302–Gln305. Positions Glu357–Ala433 are sigma-70 factor domain-3. The tract at residues Val446–His499 is sigma-70 factor domain-4. Positions Leu472 to Ser491 form a DNA-binding region, H-T-H motif.

This sequence belongs to the sigma-70 factor family. As to quaternary structure, homotrimer (Potential). interacts transiently with the RNA polymerase core complex. Interacts with RNA polymerase-binding protein RbpA via its sigma-2 region (residues 211-347) in a free form.

Its function is as follows. Sigma factors are initiation factors that promote the attachment of RNA polymerase to specific initiation sites and are then released. This sigma factor is the primary sigma factor during exponential growth. Its activity is stimulated by RbpA. The polypeptide is RNA polymerase principal sigma factor HrdB (hrdB) (Streptomyces coelicolor (strain ATCC BAA-471 / A3(2) / M145)).